The chain runs to 76 residues: cAMP-dependent protein kinase inhibitor alpha (76 aa).

Thr-2 is subject to Blocked amino end (Thr). Positions 49–76 (KAEGEGDAQRNPSEQTGEAQGEAAKQES) are disordered.

Belongs to the PKI family.

Functionally, extremely potent competitive inhibitor of cAMP-dependent protein kinase activity, this protein interacts with the catalytic subunit of the enzyme after the cAMP-induced dissociation of its regulatory chains. The chain is cAMP-dependent protein kinase inhibitor alpha (PKIA) from Gallus gallus (Chicken).